The following is a 470-amino-acid chain: Serine/threonine-protein kinase-like protein At1g28390 (470 aa).

A Protein kinase domain is found at Phe52 to Val333. Residues Leu58–Val66 and Lys81 contribute to the ATP site. Asp186 functions as the Proton acceptor in the catalytic mechanism. Phosphothreonine is present on residues Thr221 and Thr226. Tyr234 carries the phosphotyrosine modification.

Belongs to the protein kinase superfamily. Ser/Thr protein kinase family.

The catalysed reaction is L-seryl-[protein] + ATP = O-phospho-L-seryl-[protein] + ADP + H(+). It catalyses the reaction L-threonyl-[protein] + ATP = O-phospho-L-threonyl-[protein] + ADP + H(+). The chain is Serine/threonine-protein kinase-like protein At1g28390 from Arabidopsis thaliana (Mouse-ear cress).